We begin with the raw amino-acid sequence, 193 residues long: CASP-like protein 1D1 (193 aa).

The tract at residues 1–24 (MGYETKSTLDTERSTAPGTGTTTK) is disordered. The Cytoplasmic portion of the chain corresponds to 1–30 (MGYETKSTLDTERSTAPGTGTTTKSCSMTQ). The segment covering 14-24 (STAPGTGTTTK) has biased composition (polar residues). Residues 31 to 51 (VVLRFVLFAATLTSIVVMVTS) form a helical membrane-spanning segment. Residues 52-76 (KQTKNIFLPGTPIRIPAAEFTNSPA) are Extracellular-facing. A helical transmembrane segment spans residues 77–97 (LIYFVVALSVACFYSIVSTFV). Residues 98–108 (TVSAFKKHSCS) lie on the Cytoplasmic side of the membrane. A helical transmembrane segment spans residues 109 to 129 (AVLLLNLAIMDAVMVGIVASA). The Extracellular segment spans residues 130-162 (TGAGGGVAYLGLKGNKEVRWGKICHIYDKFCRH). The chain crosses the membrane as a helical span at residues 163 to 183 (VGGAIAVSLFASVVLLLLSII). Residues 184–193 (SVLSLYKKIR) lie on the Cytoplasmic side of the membrane.

It belongs to the Casparian strip membrane proteins (CASP) family. As to quaternary structure, homodimer and heterodimers.

It is found in the cell membrane. The sequence is that of CASP-like protein 1D1 from Arabidopsis thaliana (Mouse-ear cress).